Here is a 575-residue protein sequence, read N- to C-terminus: Isocitrate dehydrogenase kinase/phosphatase (575 aa).

Residues 315–321 and Lys-336 each bind ATP; that span reads APGIRGM. Asp-371 is an active-site residue.

Belongs to the AceK family.

It is found in the cytoplasm. It catalyses the reaction L-seryl-[isocitrate dehydrogenase] + ATP = O-phospho-L-seryl-[isocitrate dehydrogenase] + ADP + H(+). In terms of biological role, bifunctional enzyme which can phosphorylate or dephosphorylate isocitrate dehydrogenase (IDH) on a specific serine residue. This is a regulatory mechanism which enables bacteria to bypass the Krebs cycle via the glyoxylate shunt in response to the source of carbon. When bacteria are grown on glucose, IDH is fully active and unphosphorylated, but when grown on acetate or ethanol, the activity of IDH declines drastically concomitant with its phosphorylation. This chain is Isocitrate dehydrogenase kinase/phosphatase, found in Citrobacter koseri (strain ATCC BAA-895 / CDC 4225-83 / SGSC4696).